The following is a 505-amino-acid chain: Deoxyguanosinetriphosphate triphosphohydrolase (505 aa).

The HD domain maps to 66–273; that stretch reads RLTHSLEVQQ…MEAADDISYC (208 aa).

It belongs to the dGTPase family. Type 1 subfamily. In terms of assembly, homotetramer. Mg(2+) serves as cofactor.

The catalysed reaction is dGTP + H2O = 2'-deoxyguanosine + triphosphate + H(+). In terms of biological role, dGTPase preferentially hydrolyzes dGTP over the other canonical NTPs. The chain is Deoxyguanosinetriphosphate triphosphohydrolase from Yersinia enterocolitica serotype O:8 / biotype 1B (strain NCTC 13174 / 8081).